Consider the following 275-residue polypeptide: Diaminopimelate epimerase (275 aa).

3 residues coordinate substrate: N12, Q45, and N65. Residue C74 is the Proton donor of the active site. Residues 75–76 (GN), N158, N191, and 209–210 (ER) each bind substrate. C218 acts as the Proton acceptor in catalysis. 219 to 220 (GT) is a binding site for substrate.

This sequence belongs to the diaminopimelate epimerase family. Homodimer.

The protein resides in the cytoplasm. It carries out the reaction (2S,6S)-2,6-diaminopimelate = meso-2,6-diaminopimelate. Its pathway is amino-acid biosynthesis; L-lysine biosynthesis via DAP pathway; DL-2,6-diaminopimelate from LL-2,6-diaminopimelate: step 1/1. Functionally, catalyzes the stereoinversion of LL-2,6-diaminopimelate (L,L-DAP) to meso-diaminopimelate (meso-DAP), a precursor of L-lysine and an essential component of the bacterial peptidoglycan. The polypeptide is Diaminopimelate epimerase (Shewanella frigidimarina (strain NCIMB 400)).